Consider the following 419-residue polypeptide: Probable pectate lyase C (419 aa).

An N-terminal signal peptide occupies residues 1–19 (MRLGIALFSLIGLCHSVSA). Residues asparagine 48, asparagine 164, and asparagine 201 are each glycosylated (N-linked (GlcNAc...) asparagine). Arginine 204 is an active-site residue. An EF-hand domain is found at 261–296 (NEYFHGYVETNYYDPDRDGTLNGNELGVSASNYGGM). Aspartate 274, aspartate 276, aspartate 278, threonine 280, and glutamate 285 together coordinate Ca(2+). A disordered region spans residues 350–395 (ELISDEASMGGPGDLDGGSPPTDSDGDGIPDDAETEIGSDPNTADS). Over residues 373-386 (SDGDGIPDDAETEI) the composition is skewed to acidic residues.

It belongs to the polysaccharide lyase 1 family. Ca(2+) serves as cofactor.

It localises to the secreted. The catalysed reaction is Eliminative cleavage of (1-&gt;4)-alpha-D-galacturonan to give oligosaccharides with 4-deoxy-alpha-D-galact-4-enuronosyl groups at their non-reducing ends.. Its function is as follows. Pectinolytic enzyme consist of four classes of enzymes: pectin lyase, polygalacturonase, pectin methylesterase and rhamnogalacturonase. Among pectinolytic enzymes, pectin lyase is the most important in depolymerization of pectin, since it cleaves internal glycosidic bonds of highly methylated pectins. Favors pectate, the anion, over pectin, the methyl ester. The chain is Probable pectate lyase C (plyC) from Aspergillus terreus (strain NIH 2624 / FGSC A1156).